The following is a 586-amino-acid chain: Regulatory protein NPR3 (586 aa).

Ser-10 carries the phosphoserine modification. Residues 60-135 form the BTB domain; the sequence is SDAEIIVDGV…IYTGRLKPFP (76 aa). The C2HC NPR-type zinc-finger motif lies at 138-152; that stretch reads VSTCVDPVCSHDCCR. Cys-141, Cys-146, His-148, and Cys-151 together coordinate Zn(2+). ANK repeat units lie at residues 261 to 291, 293 to 320, and 324 to 353; these read ERIGKILKALDSDDVELVKLLLTESDITLDQ, NGLHYSVVYSDPKVVAEILALDMGDVNY, and RGYTVLHFAAMRREPSIIISLIDKGANASE. Residues 383 to 523 form a salicylic acid-binding core (SBC) region; the sequence is ESSKARLCID…MAEYIDDDIL (141 aa). Arg-428 is a salicylate binding site. The disordered stretch occupies residues 554 to 586; that stretch reads YSKDKESKIARSCLSASSSPSSSSIRDDLHNTT. Residues 565-577 show a composition bias toward low complexity; the sequence is SCLSASSSPSSSS.

The protein belongs to the plant 'ANKYRIN-BTB/POZ' family. 'NPR1-like' subfamily. In terms of assembly, forms homodimers and heterodimers with NPR4 in the presence of salicylic acid (SA). Interacts with TGA2, TGA3, TGA5 and TGA6. Interacts with CUL3A, a core component of the cullin-RING ubiquitin ligases (CRL). Interacts with TGA2 in vivo in the nucleus. Binds to NPR1; this interaction is promoted by association with SA, probably due to conformational changes.

The protein resides in the nucleus. Its pathway is protein modification; protein ubiquitination. Its function is as follows. Salicylic acid (SA)-binding substrate-specific adapter of an E3 ubiquitin-protein ligase complex (CUL3-RBX1-BTB) which mediates the ubiquitination and subsequent proteasomal degradation of NPR1 in response to SA. Together with NPR4, acts as receptor of salicylic acid to monitor immunity in a NPR1-dependent manner and induce systemic acquired resistance (SAR). Involved in the regulation of basal defense responses against pathogens, and may be implicated in the cross-talk between the SA- and JA-dependent signaling pathways. This is Regulatory protein NPR3 from Arabidopsis thaliana (Mouse-ear cress).